A 383-amino-acid polypeptide reads, in one-letter code: MKNKLPPFIEIYRALIATPSISATEEALDQSNADLITLLADWFKDLGFNVEVQPVPGTRNKFNMLASCGQGAGGLLLAGHTDTVPFDDGRWTRDPFTLTEHDGKLYGLGTADMKGFFAFILDALRDVDVTKLKKPLYILATADEETSMAGARYFAETTALRPDCAIIGEPTSLQPVRAHKGHISNAIRIQGQSGHSSDPARGVNAIELMHDAIGHILQLRDNLKERYHYDAFTVPYPTLNLGHIHGGDASNRICACCELHMDIRPLPGMTLNELNGLLNDALAPVSERWPGRLTVDELHPPIPGYECPPNHQLVEVVEKLLGAKTEVVNYCTEAPFIQTLCPTLVLGPGSINQAHQPDEYLETRFIKPTRELITQVIHHFCWH.

His80 is a binding site for Zn(2+). The active site involves Asp82. Residue Asp112 participates in Zn(2+) binding. Residue Glu144 is part of the active site. 3 residues coordinate Zn(2+): Glu145, Glu169, and His355.

This sequence belongs to the peptidase M20A family. ArgE subfamily. In terms of assembly, homodimer. The cofactor is Zn(2+). Co(2+) is required as a cofactor. It depends on glutathione as a cofactor.

The protein localises to the cytoplasm. The catalysed reaction is N(2)-acetyl-L-ornithine + H2O = L-ornithine + acetate. Its pathway is amino-acid biosynthesis; L-arginine biosynthesis; L-ornithine from N(2)-acetyl-L-ornithine (linear): step 1/1. Functionally, catalyzes the hydrolysis of the amide bond of N(2)-acetylated L-amino acids. Cleaves the acetyl group from N-acetyl-L-ornithine to form L-ornithine, an intermediate in L-arginine biosynthesis pathway, and a branchpoint in the synthesis of polyamines. The protein is Acetylornithine deacetylase of Escherichia coli O17:K52:H18 (strain UMN026 / ExPEC).